The chain runs to 489 residues: NADH-quinone oxidoreductase subunit N (489 aa).

The next 14 helical transmembrane spans lie at 8–28 (LIAM…MLSI), 35–55 (FTIA…LYYV), 75–95 (FFTA…YPWL), 105–125 (FYML…AHHL), 127–147 (SMFI…GYAF), 159–179 (YMLL…LLYA), 203–223 (VLAG…LFPF), 235–255 (PAPT…AVVM), 271–291 (MILG…ALTQ), 303–323 (VSHL…PILA), 329–349 (IYLA…AVAS), 374–394 (AVVM…LGFI), 407–427 (SLWW…FYYL), and 456–476 (LITL…QPLI).

This sequence belongs to the complex I subunit 2 family. In terms of assembly, NDH-1 is composed of 13 different subunits. Subunits NuoA, H, J, K, L, M, N constitute the membrane sector of the complex.

It is found in the cell inner membrane. The enzyme catalyses a quinone + NADH + 5 H(+)(in) = a quinol + NAD(+) + 4 H(+)(out). In terms of biological role, NDH-1 shuttles electrons from NADH, via FMN and iron-sulfur (Fe-S) centers, to quinones in the respiratory chain. The immediate electron acceptor for the enzyme in this species is believed to be ubiquinone. Couples the redox reaction to proton translocation (for every two electrons transferred, four hydrogen ions are translocated across the cytoplasmic membrane), and thus conserves the redox energy in a proton gradient. This Proteus mirabilis (strain HI4320) protein is NADH-quinone oxidoreductase subunit N.